The following is a 562-amino-acid chain: Phosphatidylinositol 4-phosphate 5-kinase type-1 alpha (562 aa).

One can recognise a PIPK domain in the interval 81-449 (TSSALKGAIQ…RFQRFMCNTV (369 aa)). Residue Lys-103 forms a Glycyl lysine isopeptide (Lys-Gly) (interchain with G-Cter in ubiquitin) linkage. Ser-486 carries the post-translational modification Phosphoserine. A disordered region spans residues 506 to 526 (HLGRPDVLPQTPPLEEISEGS).

In terms of assembly, interacts with RAC1. Interacts with TUT1. Forms a complex with CDH1/E-cadherin, CTNNB1/beta-catenin and CTNND1 at the plasma membrane upon calcium stimulation. Found in a ternary complex with IRS1 and DGKZ in the absence of insulin stimulation. Interacts with DGKZ. Interacts with PIP4K2C; the interaction inhibits PIP5K1A kinase activity. In terms of tissue distribution, highly expressed in heart, placenta, skeletal muscle, kidney and pancreas. Detected at lower levels in brain, lung and liver.

It localises to the cell membrane. The protein resides in the cytoplasm. The protein localises to the nucleus. It is found in the nucleus speckle. Its subcellular location is the cell projection. It localises to the ruffle. The protein resides in the lamellipodium. The catalysed reaction is a 1,2-diacyl-sn-glycero-3-phospho-(1D-myo-inositol 4-phosphate) + ATP = a 1,2-diacyl-sn-glycero-3-phospho-(1D-myo-inositol-4,5-bisphosphate) + ADP + H(+). It carries out the reaction 1-octadecanoyl-2-(5Z,8Z,11Z,14Z)-eicosatetraenoyl-sn-glycero-3-phospho-1D-myo-inositol 4-phosphate + ATP = 1-octadecanoyl-2-(5Z,8Z,11Z,14Z)-eicosatetraenoyl-sn-glycero-3-phospho-1D-myo-inositol 4,5-bisphosphate + ADP + H(+). It catalyses the reaction 1,2-dihexadecanoyl-sn-glycero-3-phospho-(1D-myo-inositol-4-phosphate) + ATP = 1,2-dihexadecanoyl-sn-glycero-3-phospho-(1D-myo-inositol-4,5-bisphosphate) + ADP + H(+). The enzyme catalyses 1-octadecanoyl-2-(9Z)-octadecenoyl-sn-glycero-3-phospho-1D-myo-inositol 4-phosphate + ATP = 1-octadecanoyl-2-(9Z)-octadecenoyl-sn-glycero-3-phospho-1D-myo-inositol 4,5-bisphosphate + ADP + H(+). The catalysed reaction is 1-octadecanoyl-2-(9Z)-octadecenoyl-sn-glycero-3-phospho-1D-myo-inositol + ATP = 1-octadecanoyl-2-(9Z)-octadecenoyl-sn-glycero-3-phospho-1D-myo-inositol 5-phosphate + ADP + H(+). It carries out the reaction 1-octadecanoyl-2-(9Z,12Z)-octadecadienoyl-sn-glycero-3-phospho-1D-myo-inositol + ATP = 1-octadecanoyl-2-(9Z,12Z)-octadecadienoyl-sn-glycero-3-phospho-1D-myo-inositol 5-phosphate + ADP + H(+). It catalyses the reaction 1-octadecanoyl-2-(5Z,8Z,11Z,14Z-eicosatetraenoyl)-sn-glycero-3-phospho-(1D-myo-inositol) + ATP = 1-octadecanoyl-2-(5Z,8Z,11Z,14Z)-eicosatetraenoyl-sn-glycero-3-phospho-1D-myo-inositol 5-phosphate + ADP + H(+). The enzyme catalyses 1,2-di-(9Z,12Z)-octadecadienoyl-sn-glycero-3-phospho-1D-myo-inositol + ATP = 1,2-di(9Z,12Z)-octadecadienoyl-sn-glycero-3-phospho-1D-myo-inositol 5-phosphate + ADP + H(+). With respect to regulation, activated by diarachidonoyl phosphatidic acid (DAPA), when 1,2-dipalmitoyl-PI4P is used as a substrate. In terms of biological role, catalyzes the phosphorylation of phosphatidylinositol 4-phosphate (PtdIns(4)P/PI4P) to form phosphatidylinositol 4,5-bisphosphate (PtdIns(4,5)P2/PIP2), a lipid second messenger that regulates several cellular processes such as signal transduction, vesicle trafficking, actin cytoskeleton dynamics, cell adhesion, and cell motility. PtdIns(4,5)P2 can directly act as a second messenger or can be utilized as a precursor to generate other second messengers: inositol 1,4,5-trisphosphate (IP3), diacylglycerol (DAG) or phosphatidylinositol-3,4,5-trisphosphate (PtdIns(3,4,5)P3/PIP3). PIP5K1A-mediated phosphorylation of PtdIns(4)P is the predominant pathway for PtdIns(4,5)P2 synthesis. Can also use phosphatidylinositol (PtdIns) as substrate in vitro. Together with PIP5K1C, is required for phagocytosis, both enzymes regulating different types of actin remodeling at sequential steps. Promotes particle ingestion by activating the WAS GTPase-binding protein that induces Arp2/3 dependent actin polymerization at the nascent phagocytic cup. Together with PIP5K1B, is required, after stimulation by G-protein coupled receptors, for the synthesis of IP3 that will induce stable platelet adhesion. Recruited to the plasma membrane by the E-cadherin/beta-catenin complex where it provides the substrate PtdIns(4,5)P2 for the production of PtdIns(3,4,5)P3, IP3 and DAG, that will mobilize internal calcium and drive keratinocyte differentiation. Positively regulates insulin-induced translocation of SLC2A4 to the cell membrane in adipocytes. Together with PIP5K1C has a role during embryogenesis. Independently of its catalytic activity, is required for membrane ruffling formation, actin organization and focal adhesion formation during directional cell migration by controlling integrin-induced translocation of the small GTPase RAC1 to the plasma membrane. Also functions in the nucleus where it acts as an activator of TUT1 adenylyltransferase activity in nuclear speckles, thereby regulating mRNA polyadenylation of a select set of mRNAs. This Homo sapiens (Human) protein is Phosphatidylinositol 4-phosphate 5-kinase type-1 alpha.